The sequence spans 280 residues: Tumor necrosis factor ligand superfamily member 6 (280 aa).

At 1-80 (MQQPLNYPYP…KTRRDHNTGL (80 aa)) the chain is on the cytoplasmic side. Residues 20 to 71 (SSPWGPPGSVLPCPSSVPGRPGQRRPPPPPPPTLPPPPPPPPLPPLPLPPLK) are disordered. Over residues 43 to 69 (RRPPPPPPPTLPPPPPPPPLPPLPLPP) the composition is skewed to pro residues. Residues 81–101 (CLLVMFFMVLVALVGLGLGMF) traverse the membrane as a helical; Signal-anchor for type II membrane protein segment. Over 102–280 (QLFHLQKELA…SKTFFGLYKL (179 aa)) the chain is Extracellular. In terms of domain architecture, THD spans 144 to 280 (KVAHLTGKPN…SKTFFGLYKL (137 aa)). A glycan (N-linked (GlcNAc...) asparagine) is linked at Asn183. Cys201 and Cys232 are oxidised to a cystine. N-linked (GlcNAc...) asparagine glycosylation is found at Asn249 and Asn259.

Belongs to the tumor necrosis factor family. As to quaternary structure, homotrimer. Interacts with ARHGAP9, BAIAP2L1, BTK, CACNB3, CACNB4, CRK, DLG2, DNMBP, DOCK4, EPS8L3, FGR, FYB1, FYN, HCK, ITK, ITSN2, KALRN, LYN, MACC1, MIA, MPP4, MYO15A, NCF1, NCK1, NCK2, NCKIPSD, OSTF1, PIK3R1, PSTPIP1, RIMBP3C, SAMSN1, SH3GL3, SH3PXD2B, SH3PXD2A, SH3RF2, SKAP2, SNX33, SNX9, SORBS3, SPTA1, SRC, SRGAP1, SRGAP2, SRGAP3, TEC, TJP3 and YES1. In terms of processing, the soluble form derives from the membrane form by proteolytic processing. The membrane-bound form undergoes two successive intramembrane proteolytic cleavages. The first one is processed by ADAM10 producing an N-terminal fragment, which lacks the receptor-binding extracellular domain. This ADAM10-processed FasL (FasL APL) remnant form is still membrane anchored and further processed by SPPL2A that liberates the FasL intracellular domain (FasL ICD). FasL shedding by ADAM10 is a prerequisite for subsequent intramembrane cleavage by SPPL2A in T-cells. Post-translationally, phosphorylated by FGR on tyrosine residues; this is required for ubiquitination and subsequent internalization. N-glycosylated. Glycosylation enhances apoptotic activity. In terms of processing, monoubiquitinated.

It is found in the cell membrane. The protein resides in the cytoplasmic vesicle lumen. Its subcellular location is the lysosome lumen. The protein localises to the secreted. It localises to the nucleus. Cytokine that binds to TNFRSF6/FAS, a receptor that transduces the apoptotic signal into cells. Involved in cytotoxic T-cell-mediated apoptosis, natural killer cell-mediated apoptosis and in T-cell development. Initiates fratricidal/suicidal activation-induced cell death (AICD) in antigen-activated T-cells contributing to the termination of immune responses. TNFRSF6/FAS-mediated apoptosis has also a role in the induction of peripheral tolerance. Binds to TNFRSF6B/DcR3, a decoy receptor that blocks apoptosis. Functionally, induces FAS-mediated activation of NF-kappa-B, initiating non-apoptotic signaling pathways. Can induce apoptosis but does not appear to be essential for this process. In terms of biological role, cytoplasmic form induces gene transcription inhibition. The chain is Tumor necrosis factor ligand superfamily member 6 (FASLG) from Felis catus (Cat).